Consider the following 268-residue polypeptide: Undecaprenyl-diphosphatase (268 aa).

The next 8 helical transmembrane spans lie at 4 to 24 (STTL…FIPV), 50 to 70 (IQLG…VSVI), 84 to 104 (VAVL…HGFI), 109 to 129 (FETP…LLFV), 144 to 164 (LPLN…VPGV), 185 to 205 (AEFS…FDLF), 214 to 234 (SALG…VLVV), and 247 to 267 (ALFG…LLAG).

The protein belongs to the UppP family.

It is found in the cell inner membrane. It catalyses the reaction di-trans,octa-cis-undecaprenyl diphosphate + H2O = di-trans,octa-cis-undecaprenyl phosphate + phosphate + H(+). In terms of biological role, catalyzes the dephosphorylation of undecaprenyl diphosphate (UPP). Confers resistance to bacitracin. The polypeptide is Undecaprenyl-diphosphatase (Cereibacter sphaeroides (strain ATCC 17029 / ATH 2.4.9) (Rhodobacter sphaeroides)).